The sequence spans 625 residues: Thioredoxin domain-containing protein 6 (625 aa).

An NDK region spans residues 158 to 302 (KSYTVAIIKP…FFFPNFKISN (145 aa)). The segment at 594 to 625 (GETPETSASDISRNAAAQGDDPEQDESKEMEE) is disordered. Acidic residues predominate over residues 613-625 (DDPEQDESKEMEE).

Belongs to the NDK family. In terms of assembly, monomer and homodimer.

It localises to the cytoplasm. The protein localises to the cytoskeleton. The protein resides in the cilium axoneme. It is found in the dynein axonemal particle. May be a regulator of microtubule physiology. This Xenopus laevis (African clawed frog) protein is Thioredoxin domain-containing protein 6.